The following is a 63-amino-acid chain: Conotoxin PnMRCL-0111 (63 aa).

The signal sequence occupies residues 1–19 (MRCLPVFIVLLLLIVSAPG). Positions 20 to 49 (FDARPKTEDDVPLSSFHDDLQRTVRTLLDI) are excised as a propeptide. At Trp-62 the chain carries Tryptophan amide.

Belongs to the conotoxin T superfamily. In terms of processing, contains 2 disulfide bonds that can be either 'C1-C3, C2-C4' or 'C1-C4, C2-C3', since these disulfide connectivities have been observed for conotoxins with cysteine framework V (for examples, see AC P0DQQ7 and AC P81755). As to expression, expressed by the venom duct.

The protein resides in the secreted. This is Conotoxin PnMRCL-0111 from Conus pennaceus (Feathered cone).